We begin with the raw amino-acid sequence, 649 residues long: tRNA-guanine(15) transglycosylase (649 aa).

Asp-88 (nucleophile) is an active-site residue. Residues Asp-123 and Ala-194 each contribute to the substrate site. Residues Cys-280, Cys-282, and Cys-285 each coordinate Zn(2+). Residues 573–648 (KYRIVIDSSV…VAATLRGGLK (76 aa)) enclose the PUA domain.

This sequence belongs to the archaeosine tRNA-ribosyltransferase family. It depends on Zn(2+) as a cofactor.

The enzyme catalyses guanosine(15) in tRNA + 7-cyano-7-deazaguanine = 7-cyano-7-carbaguanosine(15) in tRNA + guanine. Its pathway is tRNA modification; archaeosine-tRNA biosynthesis. Its function is as follows. Exchanges the guanine residue with 7-cyano-7-deazaguanine (preQ0) at position 15 in the dihydrouridine loop (D-loop) of archaeal tRNAs. The polypeptide is tRNA-guanine(15) transglycosylase (Methanococcus maripaludis (strain C6 / ATCC BAA-1332)).